Here is a 359-residue protein sequence, read N- to C-terminus: Peptide chain release factor 1 (359 aa).

An N5-methylglutamine modification is found at Gln236.

This sequence belongs to the prokaryotic/mitochondrial release factor family. Post-translationally, methylated by PrmC. Methylation increases the termination efficiency of RF1.

Its subcellular location is the cytoplasm. Its function is as follows. Peptide chain release factor 1 directs the termination of translation in response to the peptide chain termination codons UAG and UAA. In Mycoplasma genitalium (strain ATCC 33530 / DSM 19775 / NCTC 10195 / G37) (Mycoplasmoides genitalium), this protein is Peptide chain release factor 1 (prfA).